The chain runs to 141 residues: Hemoglobin subunit alpha (141 aa).

In terms of domain architecture, Globin spans 1 to 141 (VLSPADKTNV…VSTVLTSKYR (141 aa)). Residue serine 3 is modified to Phosphoserine. Lysine 7 bears the N6-succinyllysine mark. The residue at position 8 (threonine 8) is a Phosphothreonine. The residue at position 11 (lysine 11) is an N6-succinyllysine. Lysine 16 is subject to N6-acetyllysine; alternate. N6-succinyllysine; alternate is present on lysine 16. Residue tyrosine 24 is modified to Phosphotyrosine. Lysine 40 bears the N6-succinyllysine mark. Histidine 58 serves as a coordination point for O2. Histidine 87 contacts heme b. Serine 102 is modified (phosphoserine). At threonine 108 the chain carries Phosphothreonine. 2 positions are modified to phosphoserine: serine 124 and serine 131. Residues threonine 134 and threonine 137 each carry the phosphothreonine modification. Serine 138 bears the Phosphoserine mark.

This sequence belongs to the globin family. Heterotetramer of two alpha chains and two beta chains. In terms of tissue distribution, red blood cells.

Functionally, involved in oxygen transport from the lung to the various peripheral tissues. Its function is as follows. Hemopressin acts as an antagonist peptide of the cannabinoid receptor CNR1. Hemopressin-binding efficiently blocks cannabinoid receptor CNR1 and subsequent signaling. The chain is Hemoglobin subunit alpha (HBA) from Tursiops truncatus (Atlantic bottle-nosed dolphin).